The sequence spans 509 residues: Dihydrolipoyl dehydrogenase, mitochondrial (509 aa).

Residues 1–35 (MQSWSRVYCSLAKRGHFNRISHGLQGLSAVPLRTY) constitute a mitochondrion transit peptide. At Lys-66 the chain carries N6-acetyllysine; alternate. Lys-66 is subject to N6-succinyllysine; alternate. Residues 71 to 80 (EKNETLGGTC) and Lys-89 each bind FAD. The cysteines at positions 80 and 85 are disulfide-linked. An N6-acetyllysine; alternate mark is found at Lys-104, Lys-122, Lys-132, and Lys-143. N6-succinyllysine; alternate is present on residues Lys-104, Lys-122, Lys-132, and Lys-143. FAD is bound at residue Gly-154. Residues Lys-159 and Lys-166 each carry the N6-succinyllysine modification. Position 183–185 (183–185 (TGS)) interacts with FAD. NAD(+) is bound by residues 220–227 (GAGVIGVE) and Glu-243. Lys-273 and Lys-277 each carry N6-succinyllysine. Val-278 serves as a coordination point for NAD(+). A phosphoserine mark is found at Ser-285 and Ser-297. NAD(+) is bound at residue Gly-314. N6-acetyllysine is present on Lys-346. Residues Asp-355 and 361 to 364 (MLAH) each bind FAD. Lys-410 bears the N6-acetyllysine; alternate mark. The residue at position 410 (Lys-410) is an N6-succinyllysine; alternate. N6-acetyllysine is present on residues Lys-417 and Lys-420. Residue Lys-430 is modified to N6-succinyllysine. Catalysis depends on His-487, which acts as the Proton acceptor. A Phosphoserine modification is found at Ser-502. At Lys-505 the chain carries N6-acetyllysine; alternate. Lys-505 carries the N6-succinyllysine; alternate modification.

Belongs to the class-I pyridine nucleotide-disulfide oxidoreductase family. Homodimer. Part of the multimeric pyruvate dehydrogenase complex that contains multiple copies of pyruvate dehydrogenase (subunits PDHA (PDHA1 or PDHA2) and PDHB, E1), dihydrolipoamide acetyltransferase (DLAT, E2) and lipoamide dehydrogenase (DLD, E3). These subunits are bound to an inner core composed of about 48 DLAT and 12 PDHX molecules (by non covalent bonds). The 2-oxoglutarate dehydrogenase complex is composed of OGDH (2-oxoglutarate dehydrogenase; E1), DLST (dihydrolipoamide succinyltransferase; E2), DLD (dihydrolipoamide dehydrogenase; E3) and the assembly factor KGD4. It contains multiple copies of the three enzymatic components (E1, E2 and E3). In the nucleus, the 2-oxoglutarate dehydrogenase complex associates with KAT2A. Interacts with PDHX. The cofactor is FAD. Post-translationally, tyrosine phosphorylated.

The protein resides in the mitochondrion matrix. Its subcellular location is the nucleus. It is found in the cell projection. The protein localises to the cilium. It localises to the flagellum. The protein resides in the cytoplasmic vesicle. Its subcellular location is the secretory vesicle. It is found in the acrosome. It catalyses the reaction N(6)-[(R)-dihydrolipoyl]-L-lysyl-[protein] + NAD(+) = N(6)-[(R)-lipoyl]-L-lysyl-[protein] + NADH + H(+). Disruption of native heterodimer state inhibits primary dihydrolipoamide dehydrogenase activity and induces serine protease activity. Its function is as follows. Lipoamide dehydrogenase is a component of the glycine cleavage system as well as an E3 component of three alpha-ketoacid dehydrogenase complexes (pyruvate-, alpha-ketoglutarate-, and branched-chain amino acid-dehydrogenase complex). The 2-oxoglutarate dehydrogenase complex is mainly active in the mitochondrion. A fraction of the 2-oxoglutarate dehydrogenase complex also localizes in the nucleus and is required for lysine succinylation of histones: associates with KAT2A on chromatin and provides succinyl-CoA to histone succinyltransferase KAT2A. In monomeric form may have additional moonlighting function as serine protease. Involved in the hyperactivation of spermatazoa during capacitation and in the spermatazoal acrosome reaction. The polypeptide is Dihydrolipoyl dehydrogenase, mitochondrial (DLD) (Homo sapiens (Human)).